Reading from the N-terminus, the 421-residue chain is Gamma-glutamyl phosphate reductase (421 aa).

It belongs to the gamma-glutamyl phosphate reductase family.

The protein localises to the cytoplasm. The catalysed reaction is L-glutamate 5-semialdehyde + phosphate + NADP(+) = L-glutamyl 5-phosphate + NADPH + H(+). It participates in amino-acid biosynthesis; L-proline biosynthesis; L-glutamate 5-semialdehyde from L-glutamate: step 2/2. Its function is as follows. Catalyzes the NADPH-dependent reduction of L-glutamate 5-phosphate into L-glutamate 5-semialdehyde and phosphate. The product spontaneously undergoes cyclization to form 1-pyrroline-5-carboxylate. The protein is Gamma-glutamyl phosphate reductase of Leptospira biflexa serovar Patoc (strain Patoc 1 / ATCC 23582 / Paris).